The sequence spans 209 residues: Glutathione S-transferase 1-1 (209 aa).

The 81-residue stretch at 1-81 (MADFYYLPGS…YLVEKYGKTD (81 aa)) folds into the GST N-terminal domain. Glutathione contacts are provided by residues S10, 51–53 (HTI), and 65–67 (ESR). In terms of domain architecture, GST C-terminal spans 87-209 (CPKKRAVINQ…GCLEFKKYFE (123 aa)).

The protein belongs to the GST superfamily. Theta family. In terms of assembly, homodimer.

The enzyme catalyses RX + glutathione = an S-substituted glutathione + a halide anion + H(+). The catalysed reaction is 1,1,1-trichloro-2,2-bis(4-chlorophenyl)ethane = 1,1-dichloro-2,2-bis(4-chlorophenyl)ethylene + chloride + H(+). Conjugation of reduced glutathione to a wide number of exogenous and endogenous hydrophobic electrophiles. Has DDT dehydrochlorinase activity. The chain is Glutathione S-transferase 1-1 (GstD1) from Drosophila simulans (Fruit fly).